A 115-amino-acid polypeptide reads, in one-letter code: Ribonuclease P protein component (115 aa).

The protein belongs to the RnpA family. Consists of a catalytic RNA component (M1 or rnpB) and a protein subunit.

The enzyme catalyses Endonucleolytic cleavage of RNA, removing 5'-extranucleotides from tRNA precursor.. RNaseP catalyzes the removal of the 5'-leader sequence from pre-tRNA to produce the mature 5'-terminus. It can also cleave other RNA substrates such as 4.5S RNA. The protein component plays an auxiliary but essential role in vivo by binding to the 5'-leader sequence and broadening the substrate specificity of the ribozyme. The sequence is that of Ribonuclease P protein component from Phytoplasma australiense.